The sequence spans 626 residues: Glutamate--cysteine ligase (626 aa).

This sequence belongs to the glutamate--cysteine ligase type 3 family. Monomer.

It carries out the reaction L-cysteine + L-glutamate + ATP = gamma-L-glutamyl-L-cysteine + ADP + phosphate + H(+). Its pathway is sulfur metabolism; glutathione biosynthesis; glutathione from L-cysteine and L-glutamate: step 1/2. An essential enzyme in glutathione (L-gamma-glutamyl-L-cysteinylglycine, GSH) biosynthesis, GSH is essential for growth and differentiation to prespore stage. Catalyzes the condensation of glutamate to cysteine. The chain is Glutamate--cysteine ligase (gcsA) from Dictyostelium discoideum (Social amoeba).